Reading from the N-terminus, the 240-residue chain is Serine protease SplB (240 aa).

The signal sequence occupies residues Met-1–Ala-36. Residues His-75, Asp-113, and Ser-193 each act as charge relay system in the active site.

Belongs to the peptidase S1B family.

The protein localises to the secreted. Functionally, serine protease that cleaves specifically after the sequence Trp-Glu-Leu-Gln. This chain is Serine protease SplB (splB), found in Staphylococcus aureus (strain bovine RF122 / ET3-1).